A 284-amino-acid chain; its full sequence is Protoheme IX farnesyltransferase (284 aa).

Helical transmembrane passes span 13-33 (IIIG…FPFF), 35-55 (VFLF…SCIF), 87-107 (IFAS…VNIL), 108-128 (SMFL…FFLK), 133-153 (YSTF…HTAI), 162-182 (FLLF…IAIL), 224-244 (FLGY…FYWL), and 264-284 (FYYS…DFIF).

Belongs to the UbiA prenyltransferase family. Protoheme IX farnesyltransferase subfamily.

The protein resides in the cell membrane. The enzyme catalyses heme b + (2E,6E)-farnesyl diphosphate + H2O = Fe(II)-heme o + diphosphate. It functions in the pathway porphyrin-containing compound metabolism; heme O biosynthesis; heme O from protoheme: step 1/1. Functionally, converts heme B (protoheme IX) to heme O by substitution of the vinyl group on carbon 2 of heme B porphyrin ring with a hydroxyethyl farnesyl side group. This Buchnera aphidicola subsp. Schizaphis graminum (strain Sg) protein is Protoheme IX farnesyltransferase.